An 809-amino-acid polypeptide reads, in one-letter code: uncharacterized protein (809 aa).

The MHYT domain occupies 19–206 (HDLRLVLVAS…FTGMSAITIV (188 aa)). 7 helical membrane passes run 23–43 (LVLV…RLYS), 57–77 (LLLT…IAMV), 92–112 (TLLS…VASA), 122–142 (GGVL…SAFV), 152–172 (ATVG…LLLA), 186–206 (GMLC…ITIV), and 224–244 (TLAV…AVAI). Positions 254 to 317 (ERIRRLANAA…ADPSREDVRR (64 aa)) constitute a PAS domain. Residues 402–536 (ESLAVICIDL…GRGVYRFFKR (135 aa)) enclose the GGDEF domain. The 251-residue stretch at 545–795 (RRNLARDLRQ…ALTMWTTAGD (251 aa)) folds into the EAL domain.

The protein resides in the cell membrane. This is an uncharacterized protein from Caulobacter vibrioides (strain ATCC 19089 / CIP 103742 / CB 15) (Caulobacter crescentus).